We begin with the raw amino-acid sequence, 389 residues long: MIKDMQPFLQQAWEKAGFKELTEIQKQAIPTILEGQDVIAESPTGTGKTLAYLLPLLHKINPEVKQPQVVVLAPTRELVMQIHEEVQKFTAGTEISGASLIGGADIKRQVEKLKKHPRVIVGSPGRILELIRMKKLKMHEVKTIVFDEFDQIVKQKMMGAVQDVIKSTMRDRQLVFFSATMTKAAEDAARDLAVEPQLVRVTRAESKSLVEHTYIICERREKNDYVRRIMHMGDVKAVAFLNDPFRLDEITEKLKFRKMKAAALHAEASKQEREATMRAFRGGKLEILLATDIAARGIDIDDLTHVIHLELPDTVDQYIHRSGRTGRMGKEGTVVSLVTPQEERKLLQFAKKLGIVFTKQEMFKGSFVETKPKAPKKKKPAFTGKKKPR.

The Q motif signature appears at 1–26 (MIKDMQPFLQQAWEKAGFKELTEIQK). A Helicase ATP-binding domain is found at 29–199 (IPTILEGQDV…RDLAVEPQLV (171 aa)). Position 42–49 (42–49 (SPTGTGKT)) interacts with ATP. The DEAD box motif lies at 147-150 (DEFD). A Helicase C-terminal domain is found at 209–379 (LVEHTYIICE…TKPKAPKKKK (171 aa)). Residues 368–389 (VETKPKAPKKKKPAFTGKKKPR) form a disordered region. Basic residues predominate over residues 373-389 (KAPKKKKPAFTGKKKPR).

The catalysed reaction is ATP + H2O = ADP + phosphate + H(+). In terms of biological role, DEAD-box RNA helicase. Probably has an RNA-dependent ATPase activity and a 3' to 5' RNA helicase activity that uses the energy of ATP hydrolysis to destabilize and unwind short RNA duplexes. This is DEAD-box ATP-dependent RNA helicase CshC (cshC) from Bacillus cereus (strain ATCC 14579 / DSM 31 / CCUG 7414 / JCM 2152 / NBRC 15305 / NCIMB 9373 / NCTC 2599 / NRRL B-3711).